The chain runs to 162 residues: HTH-type transcriptional regulator IscR (162 aa).

The HTH rrf2-type domain occupies 2 to 131; sequence RLTSKGRYAV…NNITLGELVN (130 aa). Positions 28–51 form a DNA-binding region, H-T-H motif; it reads LADISERQGISLSYLEQLFSRLRK. [2Fe-2S] cluster is bound by residues cysteine 92, cysteine 98, and cysteine 104. The interval 141–162 is disordered; the sequence is RQHNEAHRPTRAQDAIDVKLRA.

Requires [2Fe-2S] cluster as cofactor.

Functionally, regulates the transcription of several operons and genes involved in the biogenesis of Fe-S clusters and Fe-S-containing proteins. This chain is HTH-type transcriptional regulator IscR, found in Cronobacter sakazakii (strain ATCC BAA-894) (Enterobacter sakazakii).